Consider the following 87-residue polypeptide: Small ribosomal subunit protein bS20 (87 aa).

The protein belongs to the bacterial ribosomal protein bS20 family.

Functionally, binds directly to 16S ribosomal RNA. The polypeptide is Small ribosomal subunit protein bS20 (Alkaliphilus metalliredigens (strain QYMF)).